A 282-amino-acid polypeptide reads, in one-letter code: MAVVLERVARYAIPIGIGFTLLQSSIYDVPGGKRAVLFDRLSGVQKQVVQEGTHFLIPWLQKAIVYDVRTRPRNIATTTGSKDLQMVSLTLRVLHRPEVGMLPQIYQNLGLDYDERVLPSIGNEILKSVVAQFDAAELITQREVVSAKIRQELVQRATEFGIRLEDVSITHMTFGKEFTKAVERKQIAQQEAERARFLVEQSEQERQANVIRAEGEAEAADIVSKALDKAGGALIQIRRLETSKEVATALANKGAQVTYLPFGAGSNAQSSSGSGLLLNVNP.

Residues 106–109 carry the AIM motif; the sequence is YQNL.

Belongs to the prohibitin family. As to quaternary structure, the mitochondrial prohibitin complex consists of two subunits (phb1 and phb2). The subunits assemble into a membrane-associated ring-shaped supercomplex of approximately 1 mDa.

It localises to the mitochondrion inner membrane. The protein localises to the cytoplasm. Functionally, prohibitin probably acts as a holdase/unfoldase for the stabilization of newly synthesized mitochondrial proteins. Involved in mitophagy; may act as an adapter for atg8 that supports mitophagosome assembly. Negatively regulates the proteolytic processing of atg32 via the i-AAA protease. Acts as a negative regulator of the m-AAA protease. This Schizosaccharomyces pombe (strain 972 / ATCC 24843) (Fission yeast) protein is Prohibitin-1 (phb1).